The chain runs to 93 residues: Alpha-elapitoxin-Oh2a (93 aa).

The signal sequence occupies residues 1–21 (MKTLLLTLVVVTIVCLDLGYT). 5 disulfides stabilise this stretch: C24–C43, C36–C64, C49–C53, C68–C79, and C80–C85.

Belongs to the three-finger toxin family. Long-chain subfamily. Type II alpha-neurotoxin sub-subfamily. In terms of tissue distribution, expressed by the venom gland.

Its subcellular location is the secreted. In terms of biological role, binds with high affinity to muscular (alpha-1/CHRNA1) and neuronal (alpha-7/CHRNA7) nicotinic acetylcholine receptor (nAChR) and inhibits acetylcholine from binding to the receptor, thereby impairing neuromuscular and neuronal transmission. This is Alpha-elapitoxin-Oh2a from Ophiophagus hannah (King cobra).